A 68-amino-acid polypeptide reads, in one-letter code: Cytotoxic linear peptide (68 aa).

Positions 1–23 (MKTQFAILLIALVLFQMFSQSEA) are cleaved as a signal peptide. At Leu-36 the chain carries Leucine amide. Residues 40–68 (GLNELDDLDELFDGEISQADIDFLKELMS) constitute a propeptide that is removed on maturation.

It belongs to the non-disulfide-bridged peptide (NDBP) superfamily. Short antimicrobial peptide (group 4) family. Expressed by the venom gland.

The protein localises to the secreted. The protein resides in the target cell membrane. Functionally, amphipathic peptide that has antibacterial activities. The sequence is that of Cytotoxic linear peptide from Pandinus cavimanus (Tanzanian red clawed scorpion).